The following is a 447-amino-acid chain: BAG family molecular chaperone regulator 5 (447 aa).

BAG domains lie at 9–86 (SISR…EQNA), 95–167 (QNIF…ENCM), 182–260 (SVAK…DLEE), 275–350 (SILK…DLKE), and 365–442 (SHKA…DLKS).

In terms of assembly, binds to the ATPase domain of HSP/HSP70 chaperones. Binds PRKN. Interacts complex with HSPA8 and JPH2.

Functionally, co-chaperone for HSP/HSP70 proteins. It functions as a nucleotide-exchange factor promoting the release of ADP from HSP70, thereby activating Hsp70-mediated protein refolding. Has an essential role in maintaining proteostasis at junctional membrane complexes (JMC), where it may function as a scaffold between the HSPA8 chaperone and JMC proteins enabling correct, HSPA8-dependent JMC protein folding. Inhibits both auto-ubiquitination of PRKN and ubiquitination of target proteins by PRKN. This chain is BAG family molecular chaperone regulator 5 (BAG5), found in Bos taurus (Bovine).